Reading from the N-terminus, the 591-residue chain is V-type ATP synthase alpha chain (591 aa).

An ATP-binding site is contributed by 232 to 239 (GPFGAGKT).

The protein belongs to the ATPase alpha/beta chains family.

It catalyses the reaction ATP + H2O + 4 H(+)(in) = ADP + phosphate + 5 H(+)(out). Produces ATP from ADP in the presence of a proton gradient across the membrane. The V-type alpha chain is a catalytic subunit. The chain is V-type ATP synthase alpha chain from Clostridium perfringens (strain ATCC 13124 / DSM 756 / JCM 1290 / NCIMB 6125 / NCTC 8237 / Type A).